A 795-amino-acid polypeptide reads, in one-letter code: Protein translocase subunit SecA 2 (795 aa).

ATP-binding positions include Gln84, Gly102–Thr106, and Asp496.

The protein belongs to the SecA family. As to quaternary structure, monomer and homodimer. Part of the essential Sec protein translocation apparatus which comprises SecA, SecYEG and auxiliary proteins SecDF. Other proteins may also be involved.

The protein localises to the cell membrane. The protein resides in the cytoplasm. The catalysed reaction is ATP + H2O + cellular proteinSide 1 = ADP + phosphate + cellular proteinSide 2.. In terms of biological role, part of the Sec protein translocase complex. Interacts with the SecYEG preprotein conducting channel. Has a central role in coupling the hydrolysis of ATP to the transfer of proteins into and across the cell membrane, serving as an ATP-driven molecular motor driving the stepwise translocation of polypeptide chains across the membrane. The chain is Protein translocase subunit SecA 2 from Streptococcus agalactiae serotype V (strain ATCC BAA-611 / 2603 V/R).